The sequence spans 545 residues: Chaperonin GroEL 2 (545 aa).

ATP is bound by residues 30-33 (TLGP), K51, 87-91 (DGTTT), G415, and D494. The interval 526–545 (EKGAGMPGMPPGGGYPGMGM) is disordered. A compositionally biased stretch (gly residues) spans 536–545 (PGGGYPGMGM).

It belongs to the chaperonin (HSP60) family. In terms of assembly, forms a cylinder of 14 subunits composed of two heptameric rings stacked back-to-back. Interacts with the co-chaperonin GroES.

Its subcellular location is the cytoplasm. It catalyses the reaction ATP + H2O + a folded polypeptide = ADP + phosphate + an unfolded polypeptide.. In terms of biological role, together with its co-chaperonin GroES, plays an essential role in assisting protein folding. The GroEL-GroES system forms a nano-cage that allows encapsulation of the non-native substrate proteins and provides a physical environment optimized to promote and accelerate protein folding. This Syntrophus aciditrophicus (strain SB) protein is Chaperonin GroEL 2.